A 1091-amino-acid polypeptide reads, in one-letter code: Exonuclease/helicase subunit RexB (1091 aa).

This sequence belongs to the helicase family. AddB/RexB type 2 subfamily. Heterodimer of RexA (AddA) and RexB. Requires Mg(2+) as cofactor.

Involved in DNA double-strand break repair. Is not involved in recombination during natural competence or in plasmid establishment. In terms of biological role, the heterodimer acts as both an ATP-dependent DNA helicase and an ATP-dependent, dual-direction single-stranded exonuclease. Recognizes the chi site generating a DNA molecule suitable for the initiation of homologous recombination. This subunit has 5' -&gt; 3' nuclease activity but not helicase activity. The chain is Exonuclease/helicase subunit RexB from Streptococcus pneumoniae serotype 4 (strain ATCC BAA-334 / TIGR4).